The chain runs to 140 residues: Nucleoside diphosphate kinase (140 aa).

The ATP site is built by lysine 11, phenylalanine 59, arginine 87, threonine 93, arginine 104, and asparagine 114. The Pros-phosphohistidine intermediate role is filled by histidine 117.

It belongs to the NDK family. As to quaternary structure, homotetramer. The cofactor is Mg(2+).

Its subcellular location is the cytoplasm. It carries out the reaction a 2'-deoxyribonucleoside 5'-diphosphate + ATP = a 2'-deoxyribonucleoside 5'-triphosphate + ADP. It catalyses the reaction a ribonucleoside 5'-diphosphate + ATP = a ribonucleoside 5'-triphosphate + ADP. Functionally, major role in the synthesis of nucleoside triphosphates other than ATP. The ATP gamma phosphate is transferred to the NDP beta phosphate via a ping-pong mechanism, using a phosphorylated active-site intermediate. The protein is Nucleoside diphosphate kinase of Azorhizobium caulinodans (strain ATCC 43989 / DSM 5975 / JCM 20966 / LMG 6465 / NBRC 14845 / NCIMB 13405 / ORS 571).